A 435-amino-acid polypeptide reads, in one-letter code: GTPase Der (435 aa).

EngA-type G domains follow at residues 3-167 (NIVA…KDEG) and 176-351 (PRIA…ENRG). Residues 9-16 (GRPNVGKS), 56-60 (DTGGY), 119-122 (NKSD), 182-189 (GRPNAGKS), 229-233 (DTAGI), and 294-297 (NKWD) each bind GTP. Positions 352–435 (KRIPTSELND…VPISIVYRKK (84 aa)) constitute a KH-like domain.

This sequence belongs to the TRAFAC class TrmE-Era-EngA-EngB-Septin-like GTPase superfamily. EngA (Der) GTPase family. Associates with the 50S ribosomal subunit.

Functionally, GTPase that plays an essential role in the late steps of ribosome biogenesis. This is GTPase Der from Cytophaga hutchinsonii (strain ATCC 33406 / DSM 1761 / CIP 103989 / NBRC 15051 / NCIMB 9469 / D465).